The following is a 229-amino-acid chain: Extracellular endonuclease (229 aa).

The first 19 residues, 1–19, serve as a signal peptide directing secretion; sequence MSARFIAVFCLFFTVTAHA. The interval 69–95 is disordered; it reads RADASNGNTSSRPGRSGISASAGKPVG. Residues 71 to 81 show a composition bias toward polar residues; sequence DASNGNTSSRP.

This sequence belongs to the EndA/NucM nuclease family.

The protein localises to the secreted. The chain is Extracellular endonuclease (endX) from Pseudomonas fluorescens biotype A.